Reading from the N-terminus, the 273-residue chain is DnaJ homolog subfamily C member 27-A (273 aa).

GTP is bound by residues 23-30 (GNAEVGKS), 71-75 (DMAGH), and 134-137 (NKID). The J domain occupies 217–273 (DSWDMLGVKPGATRDEVNKAYRKLAVLLHPDKCMAPGSEDAFKAVVNARTALLKNIK).

It belongs to the small GTPase superfamily. Rab family.

It is found in the nucleus. In terms of biological role, GTPase possibly involved in regulation of the MEK/ERK pathway. This chain is DnaJ homolog subfamily C member 27-A (dnajc27-a), found in Xenopus laevis (African clawed frog).